The sequence spans 289 residues: Proteasome subunit beta (289 aa).

Positions 1–55 (MTWPLPDRLSINSAISGSAVDLSSFAEFLRRQAPELLPASIKHGGGAVGDQLPHA) are cleaved as a propeptide — removed in mature form; by autocatalysis. T56 functions as the Nucleophile in the catalytic mechanism.

The protein belongs to the peptidase T1B family. The 20S proteasome core is composed of 14 alpha and 14 beta subunits that assemble into four stacked heptameric rings, resulting in a barrel-shaped structure. The two inner rings, each composed of seven catalytic beta subunits, are sandwiched by two outer rings, each composed of seven alpha subunits. The catalytic chamber with the active sites is on the inside of the barrel. Has a gated structure, the ends of the cylinder being occluded by the N-termini of the alpha-subunits. Is capped by the proteasome-associated ATPase, ARC.

The protein resides in the cytoplasm. It catalyses the reaction Cleavage of peptide bonds with very broad specificity.. It participates in protein degradation; proteasomal Pup-dependent pathway. With respect to regulation, the formation of the proteasomal ATPase ARC-20S proteasome complex, likely via the docking of the C-termini of ARC into the intersubunit pockets in the alpha-rings, may trigger opening of the gate for substrate entry. Interconversion between the open-gate and close-gate conformations leads to a dynamic regulation of the 20S proteasome proteolysis activity. Component of the proteasome core, a large protease complex with broad specificity involved in protein degradation. The polypeptide is Proteasome subunit beta (Mycobacterium marinum (strain ATCC BAA-535 / M)).